The chain runs to 189 residues: HTH-type transcriptional repressor LfrR (189 aa).

One can recognise an HTH tetR-type domain in the interval 12–70 (ERTRRAILDAAMLVLADHPTAALGDIAAAAGVGRSTVHRYYPERTDLLRALARHVHDLS). Positions 33 to 52 (ALGDIAAAAGVGRSTVHRYY) form a DNA-binding region, H-T-H motif. A proflavine binding region spans residues 70-71 (SN).

As to quaternary structure, homodimer. Forms a structurally asymmetric homodimer exhibiting local unfolding and a blocked drug-binding site.

Its activity is regulated as follows. Repressor activity is regulated by binding of different substrates of the LfrA multidrug efflux pump, such as acriflavine, proflavine, ethidium bromide and rhodamine 123. Binding of these ligands causes the dissociation of LfrR from the promoter, inducing lfrA expression. In terms of biological role, represses the transcription of the lfrRA operon by binding directly to the promoter region of lfrR-lfrA. Binds specifically to a 143-bp region upstream of the lfrR gene. The sequence is that of HTH-type transcriptional repressor LfrR from Mycolicibacterium smegmatis (strain ATCC 700084 / mc(2)155) (Mycobacterium smegmatis).